The sequence spans 163 residues: Transcription elongation factor GreA (163 aa).

Residues 12–73 (YEKIQKEFEA…ELSDLLARAQ (62 aa)) adopt a coiled-coil conformation.

This sequence belongs to the GreA/GreB family.

Necessary for efficient RNA polymerase transcription elongation past template-encoded arresting sites. The arresting sites in DNA have the property of trapping a certain fraction of elongating RNA polymerases that pass through, resulting in locked ternary complexes. Cleavage of the nascent transcript by cleavage factors such as GreA or GreB allows the resumption of elongation from the new 3'terminus. GreA releases sequences of 2 to 3 nucleotides. This is Transcription elongation factor GreA from Nitratiruptor sp. (strain SB155-2).